The primary structure comprises 471 residues: Glutamate--tRNA ligase 2 (471 aa).

A 'HIGH' region motif is present at residues 15-25 (PSPTGYLHIGG). The 'KMSKS' region signature appears at 243–247 (KLSKR). Lys-246 contributes to the ATP binding site.

Belongs to the class-I aminoacyl-tRNA synthetase family. Glutamate--tRNA ligase type 1 subfamily. In terms of assembly, monomer.

The protein resides in the cytoplasm. The catalysed reaction is tRNA(Glu) + L-glutamate + ATP = L-glutamyl-tRNA(Glu) + AMP + diphosphate. Catalyzes the attachment of glutamate to tRNA(Glu) in a two-step reaction: glutamate is first activated by ATP to form Glu-AMP and then transferred to the acceptor end of tRNA(Glu). This chain is Glutamate--tRNA ligase 2, found in Cereibacter sphaeroides (strain ATCC 17025 / ATH 2.4.3) (Rhodobacter sphaeroides).